Reading from the N-terminus, the 159-residue chain is Probable carbonic anhydrase (159 aa).

Residues 33–35 (RGD) and 48–49 (QD) each bind substrate. Positions 54, 71, and 76 each coordinate Zn(2+).

Belongs to the gamma-class carbonic anhydrase family. It depends on Zn(2+) as a cofactor.

The enzyme catalyses hydrogencarbonate + H(+) = CO2 + H2O. In terms of biological role, probably reversibly hydrates carbon dioxide. This chain is Probable carbonic anhydrase, found in Methanocaldococcus jannaschii (strain ATCC 43067 / DSM 2661 / JAL-1 / JCM 10045 / NBRC 100440) (Methanococcus jannaschii).